The primary structure comprises 644 residues: Sodium/potassium/calcium exchanger 3 (644 aa).

A signal peptide spans 1-44 (MRPSGDEDRARRRRRRRRRRDLLLSQLCFLASVALLLWSLSSLR). At 45-107 (EQKELDLMDL…DIFTNEDRRQ (63 aa)) the chain is on the extracellular side. N-linked (GlcNAc...) asparagine glycosylation is found at Asn71 and Asn86. The helical transmembrane segment at 108–128 (GAVVLHVLCAIYMFYALAIVC) threads the bilayer. Residues 129-153 (DDFFVPSLEKICERLHLSEDVAGAT) lie on the Cytoplasmic side of the membrane. The stretch at 149–189 (VAGATFMAAGSSAPELFTSVIGVFITKGDVGVGTIVGSAVF) is one Alpha-1 repeat. Residues 154–174 (FMAAGSSAPELFTSVIGVFIT) form a helical membrane-spanning segment. The Extracellular segment spans residues 175–182 (KGDVGVGT). Residues 183-203 (IVGSAVFNILCIIGVCGLFAG) traverse the membrane as a helical segment. Residues 204–210 (QVVALSS) are Cytoplasmic-facing. A helical membrane pass occupies residues 211–231 (WCLLRDSIYYTLSVIALIVFI). Residues 232 to 234 (YDE) lie on the Extracellular side of the membrane. A helical transmembrane segment spans residues 235 to 255 (KVSWWESLVLVLMYLIYIVIM). The Cytoplasmic segment spans residues 256–484 (KYNACIHQCF…WFMVTFASST (229 aa)). Phosphoserine is present on Ser308. The interval 405-442 (AEAGNETENENEDNENDEEEEEDEDDDEGPYTPFDTPS) is disordered. Over residues 409–433 (NETENENEDNENDEEEEEDEDDDEG) the composition is skewed to acidic residues. Residues 485-505 (LWIAAFSYMMVWMVTIIGYTL) traverse the membrane as a helical segment. Residues 506–510 (GIPDV) lie on the Extracellular side of the membrane. The chain crosses the membrane as a helical span at residues 511 to 531 (IMGITFLAAGTSVPDCMASLI). An Alpha-2 repeat occupies 518-549 (AAGTSVPDCMASLIVARQGMGDMAVSNSIGSN). Residues 532 to 549 (VARQGMGDMAVSNSIGSN) lie on the Cytoplasmic side of the membrane. The helical transmembrane segment at 550 to 570 (VFDILIGLGLPWALQTLAVDY) threads the bilayer. Residues 571–580 (GSYIRLNSRG) lie on the Extracellular side of the membrane. The helical transmembrane segment at 581 to 601 (LIYSVGLLLASVFVTVFGVHL) threads the bilayer. Residues 602–615 (NKWQLDKKLGCGCL) lie on the Cytoplasmic side of the membrane. Residues 616 to 636 (LLYGVFLCFSIMTEFNVFTFV) form a helical membrane-spanning segment. Residues 637-644 (NLPMCGDH) lie on the Extracellular side of the membrane.

The protein belongs to the Ca(2+):cation antiporter (CaCA) (TC 2.A.19) family. SLC24A subfamily. In terms of tissue distribution, abundant in the brain. Expressed at low levels in the aorta, uterus and intestine.

The protein localises to the cell membrane. It catalyses the reaction Ca(2+)(out) + K(+)(out) + 4 Na(+)(in) = Ca(2+)(in) + K(+)(in) + 4 Na(+)(out). Calcium, potassium:sodium antiporter that transports 1 Ca(2+) and 1 K(+) in exchange for 4 Na(+). The chain is Sodium/potassium/calcium exchanger 3 (SLC24A3) from Homo sapiens (Human).